A 203-amino-acid polypeptide reads, in one-letter code: LexA repressor (203 aa).

Positions 28 to 48 form a DNA-binding region, H-T-H motif; sequence RAEIASQLGFRSPNAAEEHLK. Residues Ser-120 and Lys-157 each act as for autocatalytic cleavage activity in the active site.

The protein belongs to the peptidase S24 family. As to quaternary structure, homodimer.

It carries out the reaction Hydrolysis of Ala-|-Gly bond in repressor LexA.. Functionally, represses a number of genes involved in the response to DNA damage (SOS response), including recA and lexA. Binds to the 16 bp palindromic sequence 5'-CTGTATATATATACAG-3'. In the presence of single-stranded DNA, RecA interacts with LexA causing an autocatalytic cleavage which disrupts the DNA-binding part of LexA, leading to derepression of the SOS regulon and eventually DNA repair. The sequence is that of LexA repressor from Proteus mirabilis (strain HI4320).